Here is a 328-residue protein sequence, read N- to C-terminus: Ubiquitin carboxyl-terminal hydrolase isozyme L5 (328 aa).

Residues 7-225 (EWCLMESDPG…IRFNLMAIVS (219 aa)) enclose the UCH catalytic domain. K47 bears the N6-succinyllysine mark. The active-site Nucleophile is C88. At K158 the chain carries N6-acetyllysine. H164 (proton donor) is an active-site residue. K288 is modified (N6-succinyllysine). The 29-residue stretch at 290–318 (NYLPFIMELLKTLAEHQQLIPLVEKAKEK) folds into the ULD domain. The tract at residues 312-328 (VEKAKEKQNAKKAQETK) is interaction with ADRM1.

It belongs to the peptidase C12 family. In terms of assembly, component of the 19S (PA700) regulatory complex of the 26S proteasome. Interacts with ADRM1 and NFRKB. Component of the INO80 complex; specifically part of a complex module associated with N-terminus of INO80.

The protein resides in the cytoplasm. Its subcellular location is the nucleus. It catalyses the reaction Thiol-dependent hydrolysis of ester, thioester, amide, peptide and isopeptide bonds formed by the C-terminal Gly of ubiquitin (a 76-residue protein attached to proteins as an intracellular targeting signal).. Its activity is regulated as follows. Activated by ADRM1. Inhibited by interaction with NFRKB. Functionally, protease that specifically cleaves 'Lys-48'-linked polyubiquitin chains. Deubiquitinating enzyme associated with the 19S regulatory subunit of the 26S proteasome. Putative regulatory component of the INO80 complex; however is inactive in the INO80 complex and is activated by a transient interaction of the INO80 complex with the proteasome via ADRM1. The polypeptide is Ubiquitin carboxyl-terminal hydrolase isozyme L5 (UCHL5) (Bos taurus (Bovine)).